The sequence spans 336 residues: USG-1 protein homolog (336 aa).

Belongs to the aspartate-semialdehyde dehydrogenase family.

The protein is USG-1 protein homolog (usg) of Azotobacter vinelandii.